The chain runs to 173 residues: Dirigent protein 8 (173 aa).

Residues 1–22 (MTNLILIFAAQILLFYAVASVG) form the signal peptide. 3 N-linked (GlcNAc...) asparagine glycosylation sites follow: N69, N90, and N125.

It belongs to the plant dirigent protein family. Homodimer.

The protein resides in the secreted. Its subcellular location is the extracellular space. It is found in the apoplast. In terms of biological role, dirigent proteins impart stereoselectivity on the phenoxy radical-coupling reaction, yielding optically active lignans from two molecules of coniferyl alcohol in the biosynthesis of lignans, flavonolignans, and alkaloids and thus plays a central role in plant secondary metabolism. In Arabidopsis thaliana (Mouse-ear cress), this protein is Dirigent protein 8 (DIR8).